A 548-amino-acid polypeptide reads, in one-letter code: Glucose-6-phosphate isomerase (548 aa).

Glu-353 acts as the Proton donor in catalysis. Active-site residues include His-384 and Lys-512.

Belongs to the GPI family.

Its subcellular location is the cytoplasm. It catalyses the reaction alpha-D-glucose 6-phosphate = beta-D-fructose 6-phosphate. It functions in the pathway carbohydrate biosynthesis; gluconeogenesis. Its pathway is carbohydrate degradation; glycolysis; D-glyceraldehyde 3-phosphate and glycerone phosphate from D-glucose: step 2/4. Its function is as follows. Catalyzes the reversible isomerization of glucose-6-phosphate to fructose-6-phosphate. This is Glucose-6-phosphate isomerase from Chlorobium chlorochromatii (strain CaD3).